Reading from the N-terminus, the 157-residue chain is Protein-export protein SecB (157 aa).

The protein belongs to the SecB family. As to quaternary structure, homotetramer, a dimer of dimers. One homotetramer interacts with 1 SecA dimer.

Its subcellular location is the cytoplasm. Functionally, one of the proteins required for the normal export of preproteins out of the cell cytoplasm. It is a molecular chaperone that binds to a subset of precursor proteins, maintaining them in a translocation-competent state. It also specifically binds to its receptor SecA. In Tolumonas auensis (strain DSM 9187 / NBRC 110442 / TA 4), this protein is Protein-export protein SecB.